A 434-amino-acid polypeptide reads, in one-letter code: Transcription initiation factor IIE subunit alpha (434 aa).

Positions 8–99 constitute an HTH TFE/IIEalpha-type domain; that stretch reads VQRLIKMIMR…DFCSTIDSIK (92 aa). The segment at 124–151 adopts a C4-type zinc-finger fold; the sequence is CPFCNKKFSSLDVLSLVTNEGTFACNVC. Disordered stretches follow at residues 217–251, 357–408, and 415–434; these read QQNLSKSNSDVRLSTSSPSITVDFSADKETDEKRE, STDY…EMQE, and INGFNEDDEDDEDEADFEDV. The span at 226-238 shows a compositional bias: polar residues; the sequence is DVRLSTSSPSITV. Basic and acidic residues-rich tracts occupy residues 241–251 and 376–385; these read SADKETDEKRE and IQNKRTKSIE. The span at 386-399 shows a compositional bias: polar residues; that stretch reads ENNSLPPIVSTNGI. Residues 419–434 are compositionally biased toward acidic residues; it reads NEDDEDDEDEADFEDV.

It belongs to the TFIIE alpha subunit family. In terms of assembly, TFIIE is a tetramer of two alpha (tfa1) and two beta (tfa2) subunits.

It is found in the nucleus. Functionally, recruits TFIIH to the initiation complex and stimulates the RNA polymerase II C-terminal domain kinase and DNA-dependent ATPase activities of TFIIH. Both TFIIH and TFIIE are required for promoter clearance by RNA polymerase. This Schizosaccharomyces pombe (strain 972 / ATCC 24843) (Fission yeast) protein is Transcription initiation factor IIE subunit alpha (tfa1).